Consider the following 100-residue polypeptide: Urease subunit gamma (100 aa).

Belongs to the urease gamma subunit family. Heterotrimer of UreA (gamma), UreB (beta) and UreC (alpha) subunits. Three heterotrimers associate to form the active enzyme.

It localises to the cytoplasm. It carries out the reaction urea + 2 H2O + H(+) = hydrogencarbonate + 2 NH4(+). It participates in nitrogen metabolism; urea degradation; CO(2) and NH(3) from urea (urease route): step 1/1. The chain is Urease subunit gamma from Ruegeria sp. (strain TM1040) (Silicibacter sp.).